The sequence spans 399 residues: Lipoyl synthase, mitochondrial (399 aa).

The N-terminal 14 residues, 1–14 (MALISRSCGAASRY), are a transit peptide targeting the mitochondrion. A compositionally biased stretch (low complexity) spans 39-52 (AASTSSSSSPSPST). The tract at residues 39–60 (AASTSSSSSPSPSTHNDRKKDL) is disordered. [4Fe-4S] cluster-binding residues include cysteine 128, cysteine 133, cysteine 139, cysteine 159, cysteine 163, cysteine 166, and serine 374. In terms of domain architecture, Radical SAM core spans 144-363 (EYATATATIM…EKVGQEMGFI (220 aa)).

Belongs to the radical SAM superfamily. Lipoyl synthase family. The cofactor is [4Fe-4S] cluster.

It is found in the mitochondrion. The catalysed reaction is [[Fe-S] cluster scaffold protein carrying a second [4Fe-4S](2+) cluster] + N(6)-octanoyl-L-lysyl-[protein] + 2 oxidized [2Fe-2S]-[ferredoxin] + 2 S-adenosyl-L-methionine + 4 H(+) = [[Fe-S] cluster scaffold protein] + N(6)-[(R)-dihydrolipoyl]-L-lysyl-[protein] + 4 Fe(3+) + 2 hydrogen sulfide + 2 5'-deoxyadenosine + 2 L-methionine + 2 reduced [2Fe-2S]-[ferredoxin]. The protein operates within protein modification; protein lipoylation via endogenous pathway; protein N(6)-(lipoyl)lysine from octanoyl-[acyl-carrier-protein]: step 2/2. Functionally, catalyzes the radical-mediated insertion of two sulfur atoms into the C-6 and C-8 positions of the octanoyl moiety bound to the lipoyl domains of lipoate-dependent enzymes, thereby converting the octanoylated domains into lipoylated derivatives. The chain is Lipoyl synthase, mitochondrial (lias) from Danio rerio (Zebrafish).